We begin with the raw amino-acid sequence, 209 residues long: Probable endopeptidase Cgl2188 (209 aa).

Positions 1–35 (MGKHRRNNSNATRKAVAASAVALGATAAIASPAQA) are cleaved as a signal peptide. A NlpC/P60 domain is found at 95 to 209 (ASTGQAIVDA…YMPFHSAVRF (115 aa)). Catalysis depends on cysteine 125, which acts as the Nucleophile. The active-site Proton acceptor is the histidine 173. Histidine 185 is a catalytic residue.

Belongs to the peptidase C40 family.

The protein localises to the secreted. This is Probable endopeptidase Cgl2188 from Corynebacterium glutamicum (strain ATCC 13032 / DSM 20300 / JCM 1318 / BCRC 11384 / CCUG 27702 / LMG 3730 / NBRC 12168 / NCIMB 10025 / NRRL B-2784 / 534).